Consider the following 165-residue polypeptide: Large ribosomal subunit protein uL10 (165 aa).

The protein belongs to the universal ribosomal protein uL10 family. As to quaternary structure, part of the ribosomal stalk of the 50S ribosomal subunit. The N-terminus interacts with L11 and the large rRNA to form the base of the stalk. The C-terminus forms an elongated spine to which L12 dimers bind in a sequential fashion forming a multimeric L10(L12)X complex.

Functionally, forms part of the ribosomal stalk, playing a central role in the interaction of the ribosome with GTP-bound translation factors. This Yersinia pseudotuberculosis serotype IB (strain PB1/+) protein is Large ribosomal subunit protein uL10.